We begin with the raw amino-acid sequence, 206 residues long: MATRRRTLLKVIVLGDSGVGKTSLMNQYVHKKFSMQYKATIGADFVTKELQIGEKLVTLQIWDTAGQERFQSLGAAFYRGADCCALVYDVNVLRSFDNLETWHEEFLKQASPSDPKTFPFIVLGNKIDVDGGSSRVVSDKKAADWCASNGNIPYFETSAKDDFNVDEAFLTIAKTALANEHEQDIYFQGIPDAVTENEPKGGGCAC.

A GTP-binding site is contributed by 15–22 (GDSGVGKT). The Effector region signature appears at 37 to 45 (YKATIGADF). Residues 63–67 (DTAGQ), 125–128 (NKID), and 158–159 (SA) each bind GTP. Residues Cys-204 and Cys-206 are each lipidated (S-geranylgeranyl cysteine). A Cysteine methyl ester modification is found at Cys-206.

It belongs to the small GTPase superfamily. Rab family.

Its subcellular location is the cell membrane. Intracellular vesicle trafficking and protein transport. This is Ras-related protein RABG3a (RABG3A) from Arabidopsis thaliana (Mouse-ear cress).